Consider the following 71-residue polypeptide: Heat-stable enterotoxin A (71 aa).

Residues 1–19 form the signal peptide; the sequence is MKKIVFVLVLMLSSFGAFG. Residues 20-53 constitute a propeptide that is removed on maturation; it reads QETVSGQFSDALSTPITAEVYKQACDPPLPPAEV. Intrachain disulfides connect cysteine 59–cysteine 64, cysteine 60–cysteine 68, and cysteine 63–cysteine 71.

The protein belongs to the heat-stable enterotoxin family.

It is found in the secreted. In terms of biological role, toxin which activates the particulate form of guanylate cyclase and increases cyclic GMP levels within the host intestinal epithelial cells. This chain is Heat-stable enterotoxin A (ystA), found in Yersinia enterocolitica.